The following is a 129-amino-acid chain: Small ribosomal subunit protein uS11 (129 aa).

The protein belongs to the universal ribosomal protein uS11 family. As to quaternary structure, part of the 30S ribosomal subunit. Interacts with proteins S7 and S18. Binds to IF-3.

In terms of biological role, located on the platform of the 30S subunit, it bridges several disparate RNA helices of the 16S rRNA. Forms part of the Shine-Dalgarno cleft in the 70S ribosome. The chain is Small ribosomal subunit protein uS11 from Lactiplantibacillus plantarum (strain ATCC BAA-793 / NCIMB 8826 / WCFS1) (Lactobacillus plantarum).